The following is a 268-amino-acid chain: Glucosamine-6-phosphate deaminase (268 aa).

Catalysis depends on Asp67, which acts as the Proton acceptor; for enolization step. Asn137 acts as the For ring-opening step in catalysis. His139 (proton acceptor; for ring-opening step) is an active-site residue. Glu144 (for ring-opening step) is an active-site residue.

Belongs to the glucosamine/galactosamine-6-phosphate isomerase family. NagB subfamily. As to quaternary structure, homohexamer.

The catalysed reaction is alpha-D-glucosamine 6-phosphate + H2O = beta-D-fructose 6-phosphate + NH4(+). It functions in the pathway amino-sugar metabolism; N-acetylneuraminate degradation; D-fructose 6-phosphate from N-acetylneuraminate: step 5/5. Its function is as follows. Catalyzes the reversible isomerization-deamination of glucosamine 6-phosphate (GlcN6P) to form fructose 6-phosphate (Fru6P) and ammonium ion. This Colwellia psychrerythraea (strain 34H / ATCC BAA-681) (Vibrio psychroerythus) protein is Glucosamine-6-phosphate deaminase.